The primary structure comprises 388 residues: Probable proton-coupled zinc antiporter SLC30A3 (388 aa).

Positions 1-46 (MEPSPAAGGLETTRLVSPRDRGGAGGSLRLKSLFTEPSEPLPEESK) are disordered. The Cytoplasmic portion of the chain corresponds to 1–75 (MEPSPAAGGL…TPERLHARRQ (75 aa)). The helical transmembrane segment at 76 to 96 (LYAACAVCFVFMAGEVVGGYL) threads the bilayer. Residues 97–105 (AHSLAIMTD) are Lumenal-facing. A helical membrane pass occupies residues 106 to 126 (AAHLLADVGSMMGSLFSLWLS). Zn(2+)-binding residues include H108 and D112. The Cytoplasmic segment spans residues 127 to 145 (TRPATRTMTFGWHRSETLG). The helical transmembrane segment at 146-166 (ALASVVSLWMVTGILLYLAFV) threads the bilayer. The Lumenal segment spans residues 167 to 177 (RLLHSDYHIEG). A helical membrane pass occupies residues 178 to 198 (GAMLLTASIAVCANLLMAFVL). Over 199-235 (HQAGPPHSHGSRGAEYAPLEEGPEEPLPLGNTSVRAA) the chain is Cytoplasmic. A helical transmembrane segment spans residues 236–256 (FVHVLGDLLQSFGVLAASILI). H238 and D242 together coordinate Zn(2+). Residues 257–264 (YFKPQYKA) lie on the Lumenal side of the membrane. The chain crosses the membrane as a helical span at residues 265 to 285 (ADPISTFLFSICALGSTAPTL). Over 286-388 (RDVLRILMEG…CLRCQEPPQA (103 aa)) the chain is Cytoplasmic. Y357 is covalently cross-linked (Dityrosine (Tyr-Tyr) (interchain with Y-372)). A Dityrosine (Tyr-Tyr) (interchain with Y-357) cross-link involves residue Y372.

It belongs to the cation diffusion facilitator (CDF) transporter (TC 2.A.4) family. SLC30A subfamily. In terms of assembly, homodimer; dityrosine-linked. Homodimerization seems specific of the human protein and enhances the zinc transport efficiency. Interacts with TMEM163. In terms of processing, homodimerization through dityrosine bonds is stimulated by oxidative stress.

The protein resides in the cytoplasmic vesicle. The protein localises to the secretory vesicle. It is found in the synaptic vesicle membrane. It localises to the synapse. Its subcellular location is the synaptosome. The protein resides in the late endosome membrane. The protein localises to the lysosome membrane. The catalysed reaction is Zn(2+)(in) + 2 H(+)(out) = Zn(2+)(out) + 2 H(+)(in). Probable proton-coupled zinc ion antiporter mediating the import of zinc from cytoplasm into synaptic vesicles and participating to cellular zinc ion homeostasis in the brain. The protein is Probable proton-coupled zinc antiporter SLC30A3 of Homo sapiens (Human).